Consider the following 284-residue polypeptide: Tropomyosin-1 (284 aa).

2 disordered regions span residues 1–26 (MDAIKKKMQAMKLEKDNAMDKADTCE) and 96–124 (EEDLEKSEERSGTAQQKLLEAQQSADENN). Residues 1 to 276 (MDAIKKKMQA…YKSLADEMDS (276 aa)) adopt a coiled-coil conformation. Basic and acidic residues predominate over residues 12-26 (KLEKDNAMDKADTCE). Over residues 107 to 121 (GTAQQKLLEAQQSAD) the composition is skewed to polar residues.

The protein belongs to the tropomyosin family. As to quaternary structure, homodimer.

In terms of biological role, tropomyosin, in association with the troponin complex, plays a central role in the calcium dependent regulation of muscle contraction. This chain is Tropomyosin-1, found in Bombyx mori (Silk moth).